The chain runs to 314 residues: Malate dehydrogenase (314 aa).

NAD(+) contacts are provided by residues 11–16 and Asp-35; that span reads GSGNIG. Positions 84 and 90 each coordinate substrate. Residues Asn-97 and 120 to 122 contribute to the NAD(+) site; that span reads ITN. Residues Asn-122 and Arg-153 each contribute to the substrate site. His-177 serves as the catalytic Proton acceptor.

The protein belongs to the LDH/MDH superfamily. MDH type 3 family.

It catalyses the reaction (S)-malate + NAD(+) = oxaloacetate + NADH + H(+). Functionally, catalyzes the reversible oxidation of malate to oxaloacetate. In Rickettsia bellii (strain OSU 85-389), this protein is Malate dehydrogenase.